A 365-amino-acid polypeptide reads, in one-letter code: Transcription factor MYB93 (365 aa).

HTH myb-type domains are found at residues 9 to 61 and 62 to 116; these read ENGL…TNYL and RPDI…KKKL. DNA-binding regions (H-T-H motif) lie at residues 37 to 61 and 89 to 112; these read WRAL…TNYL and WSAI…NTHL.

As to quaternary structure, interacts with FBX5.

It localises to the nucleus. The protein resides in the cytoplasm. In terms of biological role, transcription factor that acts as a negative regulator of lateral root (LR) development. Required for normal auxin responses during LR development. May be part of a negative feedback loop stimulated specifically in the endodermis upon LR initiation to ensure that LRs are formed only in the correct place. The polypeptide is Transcription factor MYB93 (Arabidopsis thaliana (Mouse-ear cress)).